The following is an 83-amino-acid chain: Exodeoxyribonuclease 7 small subunit (83 aa).

The protein belongs to the XseB family. Heterooligomer composed of large and small subunits.

It localises to the cytoplasm. The enzyme catalyses Exonucleolytic cleavage in either 5'- to 3'- or 3'- to 5'-direction to yield nucleoside 5'-phosphates.. Functionally, bidirectionally degrades single-stranded DNA into large acid-insoluble oligonucleotides, which are then degraded further into small acid-soluble oligonucleotides. This is Exodeoxyribonuclease 7 small subunit from Mesorhizobium japonicum (strain LMG 29417 / CECT 9101 / MAFF 303099) (Mesorhizobium loti (strain MAFF 303099)).